Consider the following 319-residue polypeptide: Peroxidase 13 (319 aa).

Positions 1-22 (MITIALFLVLLYFHDQLGYSAA) are cleaved as a signal peptide. Cystine bridges form between cysteine 33–cysteine 111, cysteine 66–cysteine 71, cysteine 117–cysteine 315, and cysteine 196–cysteine 222. Histidine 64 serves as the catalytic Proton acceptor. Residues aspartate 65, valine 68, glycine 70, aspartate 72, and serine 74 each coordinate Ca(2+). Position 158 (proline 158) interacts with substrate. Position 189 (histidine 189) interacts with heme b. Threonine 190 is a Ca(2+) binding site. Ca(2+)-binding residues include aspartate 235, serine 238, and aspartate 243. An N-linked (GlcNAc...) asparagine glycan is attached at asparagine 280.

The protein belongs to the peroxidase family. Classical plant (class III) peroxidase subfamily. Heme b is required as a cofactor. Requires Ca(2+) as cofactor.

It is found in the secreted. It catalyses the reaction 2 a phenolic donor + H2O2 = 2 a phenolic radical donor + 2 H2O. Removal of H(2)O(2), oxidation of toxic reductants, biosynthesis and degradation of lignin, suberization, auxin catabolism, response to environmental stresses such as wounding, pathogen attack and oxidative stress. These functions might be dependent on each isozyme/isoform in each plant tissue. This is Peroxidase 13 (PER13) from Arabidopsis thaliana (Mouse-ear cress).